We begin with the raw amino-acid sequence, 359 residues long: Type-1 angiotensin II receptor (359 aa).

At 1–25 (MMLNSSTEDGIKRIQDDCPKAGRHN) the chain is on the extracellular side. Residue N4 is glycosylated (N-linked (GlcNAc...) asparagine). Residues Q15 and D17 each coordinate angiotensin II. Cystine bridges form between C18-C274 and C101-C180. Residues 26-55 (YIFVMIPTLYSIIFVVGIFGNSLAVIVIYF) form a helical membrane-spanning segment. At 56-61 (YMKLKT) the chain is on the cytoplasmic side. Residues 62–89 (VASVFLLNLALADLCFLLTLPLWAVYTA) traverse the membrane as a helical segment. Over 90–98 (MEYRWPFGN) the chain is Extracellular. Residues 99 to 125 (YLCKIASASVSFNLYASVFLLTCLSID) form a helical membrane-spanning segment. Topologically, residues 126 to 141 (RYLAIVHPMKSRLRRT) are cytoplasmic. The helical transmembrane segment at 142 to 165 (MLVAKVTCIIIWLLAGLASLPAII) threads the bilayer. At 166–190 (HRNVFFIENTNITVCAFHYESQNST) the chain is on the extracellular side. R167 contributes to the angiotensin II binding site. The N-linked (GlcNAc...) asparagine glycan is linked to N176. Residues F182, H183, and Y184 each contribute to the angiotensin II site. Residue N188 is glycosylated (N-linked (GlcNAc...) asparagine). Residues 191-216 (LPIGLGLTKNILGFLFPFLIILTSYT) traverse the membrane as a helical segment. An angiotensin II-binding site is contributed by K199. At 217-239 (LIWKALKKAYEIQKNKPRNDDIF) the chain is on the cytoplasmic side. The helical transmembrane segment at 240–268 (KIIMAIVLFFFFSWVPHQIFTFLDVLIQL) threads the bilayer. The Extracellular portion of the chain corresponds to 269–278 (GVIHDCRIAD). A helical transmembrane segment spans residues 279-304 (IVDTAMPITICIAYFNNCLNPLFYGF). Residues 305–359 (LGKKFKKYFLQLLKYIPPKAKSHSNLSTKMSTLSYRPSDNVSSSSKKPVPCFEVE) are Cytoplasmic-facing. The span at 335-350 (STLSYRPSDNVSSSSK) shows a compositional bias: polar residues. The tract at residues 335 to 359 (STLSYRPSDNVSSSSKKPVPCFEVE) is disordered. C355 carries the S-palmitoyl cysteine lipid modification.

This sequence belongs to the G-protein coupled receptor 1 family. In terms of assembly, interacts with MAS1. Interacts with ARRB1. Interacts with FLNA (via filamin repeat 21); increases PKA-mediated phosphorylation of FLNA. Post-translationally, C-terminal Ser or Thr residues may be phosphorylated.

The protein resides in the cell membrane. Its function is as follows. Receptor for angiotensin II, a vasoconstricting peptide, which acts as a key regulator of blood pressure and sodium retention by the kidney. The activated receptor in turn couples to G-alpha proteins G(q) (GNAQ, GNA11, GNA14 or GNA15) and thus activates phospholipase C and increases the cytosolic Ca(2+) concentrations, which in turn triggers cellular responses such as stimulation of protein kinase C. This chain is Type-1 angiotensin II receptor (AGTR1), found in Oryctolagus cuniculus (Rabbit).